Reading from the N-terminus, the 318-residue chain is NADH-quinone oxidoreductase subunit H 2 (318 aa).

The next 9 membrane-spanning stretches (helical) occupy residues leucine 4–phenylalanine 24, leucine 77–proline 97, valine 106–alanine 126, leucine 146–phenylalanine 166, leucine 179–alanine 199, leucine 214–glutamate 234, isoleucine 238–leucine 258, valine 262–leucine 282, and phenylalanine 293–alanine 313.

Belongs to the complex I subunit 1 family. In terms of assembly, NDH-1 is composed of 14 different subunits. Subunits NuoA, H, J, K, L, M, N constitute the membrane sector of the complex.

It localises to the cell inner membrane. The catalysed reaction is a quinone + NADH + 5 H(+)(in) = a quinol + NAD(+) + 4 H(+)(out). Its function is as follows. NDH-1 shuttles electrons from NADH, via FMN and iron-sulfur (Fe-S) centers, to quinones in the respiratory chain. The immediate electron acceptor for the enzyme in this species is believed to be ubiquinone. Couples the redox reaction to proton translocation (for every two electrons transferred, four hydrogen ions are translocated across the cytoplasmic membrane), and thus conserves the redox energy in a proton gradient. This subunit may bind ubiquinone. This Cereibacter sphaeroides (strain ATCC 17029 / ATH 2.4.9) (Rhodobacter sphaeroides) protein is NADH-quinone oxidoreductase subunit H 2.